We begin with the raw amino-acid sequence, 218 residues long: Large ribosomal subunit protein bL25 (218 aa).

Belongs to the bacterial ribosomal protein bL25 family. CTC subfamily. As to quaternary structure, part of the 50S ribosomal subunit; part of the 5S rRNA/L5/L18/L25 subcomplex. Contacts the 5S rRNA. Binds to the 5S rRNA independently of L5 and L18.

Its function is as follows. This is one of the proteins that binds to the 5S RNA in the ribosome where it forms part of the central protuberance. This chain is Large ribosomal subunit protein bL25, found in Gluconobacter oxydans (strain 621H) (Gluconobacter suboxydans).